A 245-amino-acid polypeptide reads, in one-letter code: 1-acyl-sn-glycerol-3-phosphate acyltransferase (245 aa).

The HXXXXD motif motif lies at 73-78; it reads HQNNYD.

This sequence belongs to the 1-acyl-sn-glycerol-3-phosphate acyltransferase family.

It localises to the cell inner membrane. The catalysed reaction is a 1-acyl-sn-glycero-3-phosphate + an acyl-CoA = a 1,2-diacyl-sn-glycero-3-phosphate + CoA. It participates in phospholipid metabolism; CDP-diacylglycerol biosynthesis; CDP-diacylglycerol from sn-glycerol 3-phosphate: step 2/3. Functionally, converts lysophosphatidic acid (LPA) into phosphatidic acid by incorporating an acyl moiety at the 2 position. This enzyme can utilize either acyl-CoA or acyl-acyl-carrier-protein as the fatty acyl donor. In Salmonella typhi, this protein is 1-acyl-sn-glycerol-3-phosphate acyltransferase (plsC).